A 263-amino-acid polypeptide reads, in one-letter code: Chymotrypsinogen B2 (263 aa).

Positions 1–18 (MAFLWLLSCWALLGTTFG) are cleaved as a signal peptide. 5 cysteine pairs are disulfide-bonded: Cys-19–Cys-140, Cys-60–Cys-76, Cys-154–Cys-219, Cys-186–Cys-200, and Cys-209–Cys-238. Positions 34 to 261 (IVNGEDAVPG…LIPWVQKILA (228 aa)) constitute a Peptidase S1 domain. Active-site charge relay system residues include His-75 and Asp-120. Ser-213 (charge relay system) is an active-site residue.

Belongs to the peptidase S1 family.

The protein resides in the secreted. Its subcellular location is the extracellular space. It catalyses the reaction Preferential cleavage: Tyr-|-Xaa, Trp-|-Xaa, Phe-|-Xaa, Leu-|-Xaa.. The sequence is that of Chymotrypsinogen B2 (CTRB2) from Homo sapiens (Human).